Here is a 467-residue protein sequence, read N- to C-terminus: Squalene synthase (467 aa).

Belongs to the phytoene/squalene synthase family. The cofactor is Mg(2+).

The enzyme catalyses 2 (2E,6E)-farnesyl diphosphate + NADPH + H(+) = squalene + 2 diphosphate + NADP(+). It catalyses the reaction 2 (2E,6E)-farnesyl diphosphate + NADH + H(+) = squalene + 2 diphosphate + NAD(+). Its pathway is terpene metabolism; lanosterol biosynthesis; lanosterol from farnesyl diphosphate: step 1/3. In terms of biological role, squalene synthase; part of the third module of ergosterol biosynthesis pathway that includes the late steps of the pathway. The third module or late pathway involves the ergosterol synthesis itself through consecutive reactions that mainly occur in the endoplasmic reticulum (ER) membrane. Firstly, the squalene synthase SQS catalyzes the condensation of 2 farnesyl pyrophosphate moieties to form squalene, which is the precursor of all steroids. Secondly, the squalene epoxidase catalyzes the stereospecific oxidation of squalene to (S)-2,3-epoxysqualene, which is considered to be a rate-limiting enzyme in steroid biosynthesis. Then, the lanosterol synthase LS catalyzes the cyclization of (S)-2,3 oxidosqualene to lanosterol, a reaction that forms the sterol core. In the next steps, lanosterol is transformed to ergosterol via a complex process involving various demethylation, reduction and desaturation reactions. Lanosterol is also an intermediate in the biosynthesis of triterpenes such as ganoderic acids (GA), a group of highly oxygenated lanostane-type triterpenoids which are well recognized as a main group of unique bioactive compounds in the medicinal mushroom Ganoderma lucidum. This is Squalene synthase from Ganoderma lucidum (Ling zhi medicinal fungus).